The following is a 230-amino-acid chain: RING finger protein 141 (230 aa).

Residue Gly2 is the site of N-myristoyl glycine attachment. Residues 155-192 form an RING-type zinc finger; the sequence is CCICMDGRADLILPCAHSFCQKCIDKWSDRHRNCPICR.

The protein resides in the membrane. In terms of biological role, may be involved in spermatogenesis. This chain is RING finger protein 141 (RNF141), found in Bos taurus (Bovine).